Consider the following 472-residue polypeptide: L-fuculokinase (472 aa).

It belongs to the FGGY kinase family. A divalent metal cation serves as cofactor.

The catalysed reaction is L-fuculose + ATP = L-fuculose 1-phosphate + ADP + H(+). Its pathway is carbohydrate degradation; L-fucose degradation; L-lactaldehyde and glycerone phosphate from L-fucose: step 2/3. In terms of biological role, catalyzes the phosphorylation of L-fuculose. The polypeptide is L-fuculokinase (Salmonella typhi).